Here is a 260-residue protein sequence, read N- to C-terminus: Diphthine synthase (260 aa).

Residues Leu-9, Asp-85, Ile-88, 113-114, Leu-168, Ala-202, and His-227 each bind S-adenosyl-L-methionine; that span reads TA.

It belongs to the diphthine synthase family. Homodimer.

The catalysed reaction is 2-[(3S)-amino-3-carboxypropyl]-L-histidyl-[translation elongation factor 2] + 3 S-adenosyl-L-methionine = diphthine-[translation elongation factor 2] + 3 S-adenosyl-L-homocysteine + 3 H(+). The protein operates within protein modification; peptidyl-diphthamide biosynthesis. Functionally, S-adenosyl-L-methionine-dependent methyltransferase that catalyzes the trimethylation of the amino group of the modified target histidine residue in translation elongation factor 2 (EF-2), to form an intermediate called diphthine. The three successive methylation reactions represent the second step of diphthamide biosynthesis. This is Diphthine synthase from Haloquadratum walsbyi (strain DSM 16790 / HBSQ001).